Reading from the N-terminus, the 180-residue chain is tRNA (cytidine(56)-2'-O)-methyltransferase (180 aa).

S-adenosyl-L-methionine-binding positions include Leu-82, 112 to 116 (GAEKV), and 130 to 137 (VGNQPHSE).

Belongs to the aTrm56 family. As to quaternary structure, homodimer.

The protein localises to the cytoplasm. It catalyses the reaction cytidine(56) in tRNA + S-adenosyl-L-methionine = 2'-O-methylcytidine(56) in tRNA + S-adenosyl-L-homocysteine + H(+). In terms of biological role, specifically catalyzes the AdoMet-dependent 2'-O-ribose methylation of cytidine at position 56 in tRNAs. In Methanococcus vannielii (strain ATCC 35089 / DSM 1224 / JCM 13029 / OCM 148 / SB), this protein is tRNA (cytidine(56)-2'-O)-methyltransferase.